The sequence spans 691 residues: Two-component response regulator ORR21 (691 aa).

Positions 17 to 132 (KVLVVDDDPT…ELKNIWQHVI (116 aa)) constitute a Response regulatory domain. Position 68 is a 4-aspartylphosphate (Asp-68). Residues 139-155 (NKEHEHSGSLDDTDRTR) are compositionally biased toward basic and acidic residues. The disordered stretch occupies residues 139 to 204 (NKEHEHSGSL…DPSSTSKKPR (66 aa)). The segment at residues 199–258 (TSKKPRVVWSVELHQQFVNAVNHLGIDKAVPKKILELMNVPGLTRENVASHLQKFRLYLK) is a DNA-binding region (myb-like GARP).

It belongs to the ARR family. Type-B subfamily. Post-translationally, two-component system major event consists of a His-to-Asp phosphorelay between a sensor histidine kinase (HK) and a response regulator (RR). In plants, the His-to-Asp phosphorelay involves an additional intermediate named Histidine-containing phosphotransfer protein (HPt). This multistep phosphorelay consists of a His-Asp-His-Asp sequential transfer of a phosphate group between first a His and an Asp of the HK protein, followed by the transfer to a conserved His of the HPt protein and finally the transfer to an Asp in the receiver domain of the RR protein.

The protein localises to the nucleus. Functionally, transcriptional activator that binds specific DNA sequence. Functions as a response regulator involved in His-to-Asp phosphorelay signal transduction system. Phosphorylation of the Asp residue in the receiver domain activates the ability of the protein to promote the transcription of target genes. May directly activate some type-A response regulators in response to cytokinins. The polypeptide is Two-component response regulator ORR21 (Oryza sativa subsp. japonica (Rice)).